The chain runs to 310 residues: Ribosomal RNA small subunit methyltransferase H (310 aa).

Residues 40–42, Asp59, Phe89, Asp104, and Gln111 contribute to the S-adenosyl-L-methionine site; that span reads GGH.

It belongs to the methyltransferase superfamily. RsmH family.

It localises to the cytoplasm. It carries out the reaction cytidine(1402) in 16S rRNA + S-adenosyl-L-methionine = N(4)-methylcytidine(1402) in 16S rRNA + S-adenosyl-L-homocysteine + H(+). Its function is as follows. Specifically methylates the N4 position of cytidine in position 1402 (C1402) of 16S rRNA. The protein is Ribosomal RNA small subunit methyltransferase H of Amoebophilus asiaticus (strain 5a2).